Here is a 389-residue protein sequence, read N- to C-terminus: Phospho-N-acetylmuramoyl-pentapeptide-transferase (389 aa).

10 helical membrane passes run 21-41 (FITF…LFFG), 70-90 (GTPT…TLLW), 97-117 (FVWV…VDDY), 134-154 (YMWQ…SVSA), 189-209 (TISY…VIVG), 222-242 (GLAI…AYLT), 259-279 (AGEL…FLWF), 286-306 (VFMG…IAVI), 311-331 (IVLF…MIQV), and 366-386 (QVVV…LSTL).

Belongs to the glycosyltransferase 4 family. MraY subfamily. It depends on Mg(2+) as a cofactor.

It localises to the cell inner membrane. It carries out the reaction UDP-N-acetyl-alpha-D-muramoyl-L-alanyl-gamma-D-glutamyl-meso-2,6-diaminopimeloyl-D-alanyl-D-alanine + di-trans,octa-cis-undecaprenyl phosphate = di-trans,octa-cis-undecaprenyl diphospho-N-acetyl-alpha-D-muramoyl-L-alanyl-D-glutamyl-meso-2,6-diaminopimeloyl-D-alanyl-D-alanine + UMP. The protein operates within cell wall biogenesis; peptidoglycan biosynthesis. Catalyzes the initial step of the lipid cycle reactions in the biosynthesis of the cell wall peptidoglycan: transfers peptidoglycan precursor phospho-MurNAc-pentapeptide from UDP-MurNAc-pentapeptide onto the lipid carrier undecaprenyl phosphate, yielding undecaprenyl-pyrophosphoryl-MurNAc-pentapeptide, known as lipid I. In Herminiimonas arsenicoxydans, this protein is Phospho-N-acetylmuramoyl-pentapeptide-transferase.